We begin with the raw amino-acid sequence, 572 residues long: Glypican-5 (572 aa).

An N-terminal signal peptide occupies residues 1–24; it reads MDARTWRLGWRCLLLLALLGSTRS. Residues Asn-120 and Asn-237 are each glycosylated (N-linked (GlcNAc...) asparagine). An O-linked (Xyl...) (glycosaminoglycan) serine glycan is attached at Ser-486. N-linked (GlcNAc...) asparagine glycosylation occurs at Asn-493. Ser-495, Ser-507, and Ser-509 each carry an O-linked (Xyl...) (glycosaminoglycan) serine glycan. Asn-527 is a glycosylation site (N-linked (GlcNAc...) asparagine).

It belongs to the glypican family.

The protein localises to the cell membrane. It localises to the secreted. It is found in the extracellular space. In terms of biological role, cell surface proteoglycan that bears heparan sulfate. In Mus musculus (Mouse), this protein is Glypican-5 (Gpc5).